The sequence spans 128 residues: MGLMWGLFSVIIASAAQLSLGFAASHLPPMTHLWDFIAALLAFGLDARILLLGLLGYLLSVFCWYKTLHKLALSKAYALLSMSYVLVWIASMILPGWEGTFSLKALLGVACIMSGLMLIFLPTTKQRY.

The Cytoplasmic segment spans residues 1 to 2 (MG). Residues 3–23 (LMWGLFSVIIASAAQLSLGFA) form a helical membrane-spanning segment. Residues 24–35 (ASHLPPMTHLWD) are Periplasmic-facing. Residues 36 to 56 (FIAALLAFGLDARILLLGLLG) traverse the membrane as a helical segment. The Cytoplasmic portion of the chain corresponds to 57–76 (YLLSVFCWYKTLHKLALSKA). A helical transmembrane segment spans residues 77–97 (YALLSMSYVLVWIASMILPGW). Over 98-100 (EGT) the chain is Periplasmic. Residues 101–121 (FSLKALLGVACIMSGLMLIFL) traverse the membrane as a helical segment. Topologically, residues 122–128 (PTTKQRY) are cytoplasmic.

It belongs to the ArnF family. In terms of assembly, heterodimer of ArnE and ArnF.

It is found in the cell inner membrane. Its pathway is bacterial outer membrane biogenesis; lipopolysaccharide biosynthesis. In terms of biological role, translocates 4-amino-4-deoxy-L-arabinose-phosphoundecaprenol (alpha-L-Ara4N-phosphoundecaprenol) from the cytoplasmic to the periplasmic side of the inner membrane. The protein is Probable 4-amino-4-deoxy-L-arabinose-phosphoundecaprenol flippase subunit ArnF of Escherichia coli O17:K52:H18 (strain UMN026 / ExPEC).